The sequence spans 385 residues: Phosphatidate cytidylyltransferase, mitochondrial (385 aa).

It belongs to the TAM41 family. It depends on Mg(2+) as a cofactor. Requires Co(2+) as cofactor. The cofactor is Cu(2+).

The protein resides in the mitochondrion inner membrane. The catalysed reaction is a 1,2-diacyl-sn-glycero-3-phosphate + CTP + H(+) = a CDP-1,2-diacyl-sn-glycerol + diphosphate. The protein operates within phospholipid metabolism; CDP-diacylglycerol biosynthesis; CDP-diacylglycerol from sn-glycerol 3-phosphate: step 3/3. Functionally, catalyzes the formation of CDP-diacylglycerol (CDP-DAG) from phosphatidic acid (PA) in the mitochondrial inner membrane. Required for the biosynthesis of the dimeric phospholipid cardiolipin, which stabilizes supercomplexes of the mitochondrial respiratory chain in the mitochondrial inner membrane. This Saccharomyces cerevisiae (strain ATCC 204508 / S288c) (Baker's yeast) protein is Phosphatidate cytidylyltransferase, mitochondrial (TAM41).